The sequence spans 435 residues: Probable E3 ubiquitin-protein ligase makorin-1 (435 aa).

2 consecutive C3H1-type zinc fingers follow at residues W18 to T45 and K48 to P75. Positions L81–P109 are disordered. Residues D99–V108 show a composition bias toward pro residues. The C3H1-type 3 zinc finger occupies Q155–V182. The segment at C183–H210 is makorin-type Cys-His. The segment at C228–R282 adopts an RING-type zinc-finger fold. The C3H1-type 4 zinc-finger motif lies at G311–P340. Positions E345–W369 are disordered.

In terms of tissue distribution, weakly expressed in adult brain, heart and kidney.

It carries out the reaction S-ubiquitinyl-[E2 ubiquitin-conjugating enzyme]-L-cysteine + [acceptor protein]-L-lysine = [E2 ubiquitin-conjugating enzyme]-L-cysteine + N(6)-ubiquitinyl-[acceptor protein]-L-lysine.. It functions in the pathway protein modification; protein ubiquitination. E3 ubiquitin ligase catalyzing the covalent attachment of ubiquitin moieties onto substrate proteins. The polypeptide is Probable E3 ubiquitin-protein ligase makorin-1 (Seriola quinqueradiata (Five-ray yellowtail)).